The chain runs to 226 residues: Lysoplasmalogenase TMEM86B (226 aa).

Topologically, residues 1-23 are cytoplasmic; sequence MDAGKAGQTLKTHCSAQRPDVCR. A helical transmembrane segment spans residues 24-40; that stretch reads WLSPFILSCCVYFCLWI. Residues 41–46 are Extracellular-facing; the sequence is PEDQLS. A helical membrane pass occupies residues 47 to 67; it reads WFAALVKCLPVLCLAGFLWVM. Topologically, residues 68–75 are cytoplasmic; the sequence is SPSGGYTQ. A helical transmembrane segment spans residues 76–93; it reads LLQGALVCSAVGDACLIW. The Extracellular segment spans residues 94–100; that stretch reads PAAFVPG. Residues 101–117 form a helical membrane-spanning segment; the sequence is MAAFATAHLLYVWAFGF. At 118–123 the chain is on the cytoplasmic side; the sequence is SPLQPG. A helical membrane pass occupies residues 124 to 140; it reads LLLLIILAPGPYLSLVL. Residues 141 to 146 are Extracellular-facing; that stretch reads QHLEPD. Residues 147 to 163 form a helical membrane-spanning segment; the sequence is MVLPVAAYGLILMAMLW. Residues 164 to 171 lie on the Cytoplasmic side of the membrane; the sequence is RGLAQGGS. Residues 172–188 form a helical membrane-spanning segment; the sequence is AGWGALLFTLSDGVLAW. Over 189–199 the chain is Extracellular; sequence DTFAQPLPHAH. The helical transmembrane segment at 200-218 threads the bilayer; sequence LVIMTTYYAAQLLITLSAL. Over 219–226 the chain is Cytoplasmic; that stretch reads RSPVPKTD.

This sequence belongs to the TMEM86 family. Homodimer.

Its subcellular location is the endoplasmic reticulum membrane. It is found in the cytoplasm. The catalysed reaction is a 1-O-(1Z-alkenyl)-sn-glycero-3-phosphocholine + H2O = a 2,3-saturated aldehyde + sn-glycerol 3-phosphocholine. It catalyses the reaction a 1-O-(1Z-alkenyl)-sn-glycero-3-phosphoethanolamine + H2O = a 2,3-saturated aldehyde + sn-glycero-3-phosphoethanolamine. With respect to regulation, competitively inhibited by lysophosphatidic acid. Functionally, catalyzes the hydrolysis of the vinyl ether bond of choline or ethanolamine lysoplasmalogens, forming fatty aldehyde and glycerophosphocholine or glycerophosphoethanolamine, respectively and is specific for the sn-2-deacylated (lyso) form of plasmalogen. This Homo sapiens (Human) protein is Lysoplasmalogenase TMEM86B (TMEM86B).